Here is a 155-residue protein sequence, read N- to C-terminus: DNA gyrase inhibitor (155 aa).

Belongs to the DNA gyrase inhibitor family. In terms of assembly, interacts with DNA gyrase.

The protein resides in the cytoplasm. Functionally, inhibits the supercoiling activity of DNA gyrase. Acts by inhibiting DNA gyrase at an early step, prior to (or at the step of) binding of DNA by the gyrase. It protects cells against toxins that target DNA gyrase, by inhibiting activity of these toxins and reducing the formation of lethal double-strand breaks in the cell. In Salmonella arizonae (strain ATCC BAA-731 / CDC346-86 / RSK2980), this protein is DNA gyrase inhibitor.